The chain runs to 298 residues: Bifunctional methyltransferase/endonuclease (298 aa).

The probable methylated-DNA--protein-cysteine methyltransferase stretch occupies residues 1 to 79 (MQSIDLYSYL…SLGIDEKIRR (79 aa)). The active site involves Cys-56. The segment at 80–298 (LRNDGIEINN…TVALRRNNII (219 aa)) is endonuclease V. Residues Asp-137 and Asp-197 each contribute to the Mg(2+) site.

This sequence in the N-terminal section; belongs to the MGMT family. It in the C-terminal section; belongs to the endonuclease V family. Mg(2+) is required as a cofactor.

Its subcellular location is the cytoplasm. It catalyses the reaction Endonucleolytic cleavage at apurinic or apyrimidinic sites to products with a 5'-phosphate.. In terms of biological role, DNA repair enzyme involved in the repair of deaminated bases. Selectively cleaves double-stranded DNA at the second phosphodiester bond 3' to a deoxyinosine leaving behind the intact lesion on the nicked DNA. The polypeptide is Bifunctional methyltransferase/endonuclease (Picrophilus torridus (strain ATCC 700027 / DSM 9790 / JCM 10055 / NBRC 100828 / KAW 2/3)).